A 416-amino-acid polypeptide reads, in one-letter code: FBD-associated F-box protein At3g52670 (416 aa).

An F-box domain is found at 9 to 62 (EDRMNQLPEDLILRILSFLPTELVIATSVLSKQWRSLWKLVPNLEFDSDDYESE). The FBD domain maps to 327 to 378 (KWNEPKYVPECLLSHLETFVWIRYDWEREEEKEVATYILRNARWLKKGTIST).

The chain is FBD-associated F-box protein At3g52670 from Arabidopsis thaliana (Mouse-ear cress).